The following is a 417-amino-acid chain: 3-isopropylmalate dehydratase large subunit (417 aa).

3 residues coordinate [4Fe-4S] cluster: Cys298, Cys358, and Cys361.

It belongs to the aconitase/IPM isomerase family. LeuC type 2 subfamily. Heterodimer of LeuC and LeuD. The cofactor is [4Fe-4S] cluster.

The catalysed reaction is (2R,3S)-3-isopropylmalate = (2S)-2-isopropylmalate. It participates in amino-acid biosynthesis; L-leucine biosynthesis; L-leucine from 3-methyl-2-oxobutanoate: step 2/4. Functionally, catalyzes the isomerization between 2-isopropylmalate and 3-isopropylmalate, via the formation of 2-isopropylmaleate. This Thermoanaerobacter pseudethanolicus (strain ATCC 33223 / 39E) (Clostridium thermohydrosulfuricum) protein is 3-isopropylmalate dehydratase large subunit.